The sequence spans 364 residues: Trans-enoyl reductase traG (364 aa).

An NADP(+)-binding site is contributed by Val-51–Lys-54. Leu-136–Leu-143 lines the substrate pocket. NADP(+)-binding positions include Ser-176–Thr-179, Ser-199–Asn-202, Tyr-217, and Leu-264–Glu-265. Ala-286–Phe-290 contributes to the substrate binding site. Met-355–Ser-356 contacts NADP(+).

The protein belongs to the zinc-containing alcohol dehydrogenase family. In terms of assembly, monomer.

It participates in secondary metabolite biosynthesis. Functionally, trans-enoyl reductase; part of the tra gene cluster that produces terrestric acid. The clavatol biosynthesis cluster cla and the terrestric acid cluster tra are both involved in the production of peniphenones and penilactones. The non-reducing PKS claF is responsible for the formation of clavatol from successive condensations of 3 malonyl-CoA units, presumably with a simple acetyl-CoA starter unit, and 2 methylation steps. The esterase claE probably collaborates with claF by catalyzing the hydrolysis of ACP-bound acyl intermediates to free the ACP from stalled intermediates. The clavatol oxidase claD then converts clavatol to hydroxyclavatol. Spontaneous dehydration of hydroxyclavatol leads to the accumulation of the highly active ortho-quinone methide. On the other hand, the PKS-NRPS hybrid traA is involved in the formation of crustosic acid, with the help of traB and traD. The polyketide synthase module (PKS) of traA is responsible for the synthesis of the polyketide backbone via the condensation of an acetyl-CoA starter unit with 3 malonyl-CoA units. The downstream nonribosomal peptide synthetase (NRPS) module then amidates the carboxyl end of the polyketide with L-malic acid. Because traA lacks a designated enoylreductase (ER) domain, the required activity is provided the enoyl reductase traG. Crustosic acid undergoes decarboxylation and isomerization to the terrestric acid, catalyzed by the 2-oxoglutarate-dependent dioxygenase traH. Both acids are further converted to the 2 gamma-butyrolactones (R)-5-methyltetronic acid and (S)-5-carboxylmethyltetronic acid, with involvement of the cytochrome P450 monooxygenase claJ. Spontaneous addition of the methide to these gamma-butyrolactones leads to peniphenone D and penilactone D, which undergo again stereospecific attacking by methide to give penilactones A and B. This chain is Trans-enoyl reductase traG, found in Penicillium crustosum (Blue mold fungus).